A 227-amino-acid polypeptide reads, in one-letter code: UPF0758 protein PG_0894 (227 aa).

Residues 104 to 227 (SITDSRMAYR…YFSFADEGLL (124 aa)) enclose the MPN domain. 3 residues coordinate Zn(2+): His-175, His-177, and Asp-188. A JAMM motif motif is present at residues 175-188 (HNHPSGTVRPSEQD).

It belongs to the UPF0758 family.

The protein is UPF0758 protein PG_0894 of Porphyromonas gingivalis (strain ATCC BAA-308 / W83).